A 502-amino-acid chain; its full sequence is Protein IWS1 homolog 1 (502 aa).

Residues 1 to 12 (MGFEDDPYRDVD) are compositionally biased toward basic and acidic residues. Disordered regions lie at residues 1–61 (MGFE…DNDK) and 87–208 (DEDV…DEDE). Composition is skewed to acidic residues over residues 13–22 (GEPIVDFDDF), 34–49 (QDFD…DWDG), and 87–97 (DEDVDDAEFDE). Composition is skewed to basic and acidic residues over residues 138–151 (NRGE…DEMW) and 181–194 (PSER…DRSP). Y185 carries the post-translational modification Phosphotyrosine. The 84-residue stretch at 287–370 (TLLKNWLEPL…DKWSRPIFNK (84 aa)) folds into the TFIIS N-terminal domain. The tract at residues 385–434 (VPYRRPPVKKPSNKATMESRDGDFDLEIRERKTGLTSGQSSRGDRQMTMR) is disordered. Basic and acidic residues predominate over residues 401–417 (MESRDGDFDLEIRERKT).

This sequence belongs to the IWS1 family. As to quaternary structure, interacts with BZR2/BES1 and SPT6 (via N-terminus). Interacts with ASHH2/SDG8.

Its subcellular location is the nucleus. Its function is as follows. Transcription factor involved in RNA polymerase II (RNAPII) transcription regulation. Involved in transcription elongation. May function at post-recruitment and elongation steps of transcription. May be recruited by BZR2/BES1 to target genes and promote their expression during transcription elongation process. Required for brassinosteroid (BR)-induced gene expression. Required the for regulation of numerous nitrogen-responsive genes in roots. Acts in roots to repress NRT2.1 transcription in response to high nitrogen supply. This repression is associated with an IWS1-dependent increase of trimethylation on 'Lys-27' H3K27me3 at the NRT2.1 locus. The sequence is that of Protein IWS1 homolog 1 from Arabidopsis thaliana (Mouse-ear cress).